A 385-amino-acid polypeptide reads, in one-letter code: POU domain, class 3, transcription factor 2-B (385 aa).

3 disordered regions span residues 106–136 (LVHPAHGNHHGPGAWRSTGSTHLSSMASSNG), 149–209 (NGMI…TPTS), and 351–385 (EKRMTPPGGTIPGAEDVYGASRDTPPHLGVQTSVQ). Residues 122–136 (STGSTHLSSMASSNG) are compositionally biased toward polar residues. Over residues 165-178 (LRDSHDDHHGDHGH) the composition is skewed to basic and acidic residues. The span at 179–196 (QQPSQTQQQQQQHSQLQG) shows a compositional bias: low complexity. The 75-residue stretch at 204-278 (EDTPTSDDLE…LLNKWLEEAD (75 aa)) folds into the POU-specific domain. A DNA-binding region (homeobox) is located at residues 296–355 (KRKKRTSIEVSVKGALESHFLKCPKPAAQEITSLADSLQLEKEVVRVWFCNRRQKEKRMT).

This sequence belongs to the POU transcription factor family. Class-3 subfamily. In terms of tissue distribution, expressed in the developing brain and spinal cord. Also found in a restricted region of the auditory vesicle during development. In the adult, expression is restricted to the brain.

It is found in the nucleus. Its function is as follows. Transcription factor that may be implicated in patterning of the central nervous system during early development. This Xenopus laevis (African clawed frog) protein is POU domain, class 3, transcription factor 2-B (pou3f2-b).